The primary structure comprises 128 residues: MAQEFSRTERVRHQLQREIAMILQREIKDPRVSMVTVSDVEVSRDLAYAKVFVTFFQDDPEQTKQALKVLNEASGFIRSLLGKRIKARIVPQLRFQHDASLNEGIRMGKLVAEARERDKKSSENSGDD.

It belongs to the RbfA family. Monomer. Binds 30S ribosomal subunits, but not 50S ribosomal subunits or 70S ribosomes.

It localises to the cytoplasm. Its function is as follows. One of several proteins that assist in the late maturation steps of the functional core of the 30S ribosomal subunit. Associates with free 30S ribosomal subunits (but not with 30S subunits that are part of 70S ribosomes or polysomes). Required for efficient processing of 16S rRNA. May interact with the 5'-terminal helix region of 16S rRNA. The polypeptide is Ribosome-binding factor A (Idiomarina loihiensis (strain ATCC BAA-735 / DSM 15497 / L2-TR)).